We begin with the raw amino-acid sequence, 292 residues long: Manganese transport system membrane protein MntC (292 aa).

The next 8 helical transmembrane spans lie at 20–40, 58–78, 96–116, 137–157, 168–188, 190–210, 226–246, and 249–269; these read ALTAAILVGIICGVIGCFIIL, VVIAYMIGASFFIGAVITGVI, SAIGILFTAAFALGIVLITGM, TDLWVTLGIGLFVLLIIILFY, VMAQATGIPVQMIHYLLMLLL, LVTVAALQTVGIVLVVAMLIT, LCLAAMFGVISAIAGIYFSVI, and VASGASIVLVASTLFALAFFF.

Belongs to the ABC-3 integral membrane protein family.

The protein resides in the cell membrane. Functionally, this protein is probably a component of a manganese permease, a binding protein-dependent, ATP-driven transport system. This chain is Manganese transport system membrane protein MntC (mntC), found in Halalkalibacterium halodurans (strain ATCC BAA-125 / DSM 18197 / FERM 7344 / JCM 9153 / C-125) (Bacillus halodurans).